Here is a 345-residue protein sequence, read N- to C-terminus: 3-dehydroquinate synthase (345 aa).

Residues 86 to 90 (GALLD), 110 to 111 (TT), Lys123, and Lys132 each bind NAD(+). Zn(2+) contacts are provided by Glu165, His229, and His243.

This sequence belongs to the sugar phosphate cyclases superfamily. Dehydroquinate synthase family. It depends on NAD(+) as a cofactor. Co(2+) serves as cofactor. The cofactor is Zn(2+).

It localises to the cytoplasm. It catalyses the reaction 7-phospho-2-dehydro-3-deoxy-D-arabino-heptonate = 3-dehydroquinate + phosphate. The protein operates within metabolic intermediate biosynthesis; chorismate biosynthesis; chorismate from D-erythrose 4-phosphate and phosphoenolpyruvate: step 2/7. Its function is as follows. Catalyzes the conversion of 3-deoxy-D-arabino-heptulosonate 7-phosphate (DAHP) to dehydroquinate (DHQ). The chain is 3-dehydroquinate synthase from Pyrobaculum aerophilum (strain ATCC 51768 / DSM 7523 / JCM 9630 / CIP 104966 / NBRC 100827 / IM2).